The primary structure comprises 328 residues: D-cysteine desulfhydrase (328 aa).

Lys51 is modified (N6-(pyridoxal phosphate)lysine).

The protein belongs to the ACC deaminase/D-cysteine desulfhydrase family. In terms of assembly, homodimer. The cofactor is pyridoxal 5'-phosphate.

The enzyme catalyses D-cysteine + H2O = hydrogen sulfide + pyruvate + NH4(+) + H(+). Catalyzes the alpha,beta-elimination reaction of D-cysteine and of several D-cysteine derivatives. It could be a defense mechanism against D-cysteine. The sequence is that of D-cysteine desulfhydrase from Salmonella paratyphi B (strain ATCC BAA-1250 / SPB7).